We begin with the raw amino-acid sequence, 1562 residues long: Neuralized-like protein 4 (1562 aa).

The span at 1–42 (MAAGSGGSGGSGGGPGPGPGGGGGPSGSGSGPGSNGGLGSGG) shows a compositional bias: gly residues. 2 disordered regions span residues 1–48 (MAAG…HPRT) and 207–236 (PEPG…LAEQ). NHR domains lie at 41 to 207 (GGEL…VLPP) and 317 to 484 (ALLF…IVHN). Over residues 207–224 (PEPGFSPPTPIPTPPLEP) the composition is skewed to pro residues. S502 carries the post-translational modification Phosphoserine. 2 consecutive NHR domains span residues 520–686 (RLLF…IVDD) and 716–884 (DLRF…ITNA). Positions 691–716 (PVPEPLPEGNNQVSPSSPSSGAGGSD) are disordered. Phosphoserine is present on S907. The 174-residue stretch at 913 to 1086 (AHRFHSTCGK…PVRGVSIVSS (174 aa)) folds into the NHR 5 domain. A disordered region spans residues 1086-1123 (STRLEESEGTQPPSPSSDTGSEGEEDDEGEEHGLGGQN). Residues 1106 to 1115 (SEGEEDDEGE) are compositionally biased toward acidic residues. The NHR 6 domain maps to 1131 to 1294 (TLEFLENHGK…QCEQVTIVNP (164 aa)).

As to quaternary structure, interacts with CCP110; this interaction propmotes CCP110 ubiquitination and degradation via the proteasome pathway. Via its interaction with CCP110, may indirectly interact with CEP97. Interacts with the E3 ubiquitin-protein ligase HERC2 and UBE3A. May interact with MAPK6 and hence mediate MAPK6 interaction with UBE3A. Interaction with UBE3A may be indirect and mediated by HERC2. Post-translationally, ubiquitinated; undergoes HERC2-dependent 'Lys-48' ubiquitination. This ubiquitination leads to proteasomal degradation. Widely expressed at high levels (including brain).

It is found in the cytoplasm. It localises to the cytoskeleton. The protein localises to the microtubule organizing center. Its subcellular location is the centrosome. The protein resides in the centriole. Functionally, promotes CCP110 ubiquitination and proteasome-dependent degradation. By counteracting accumulation of CP110, maintains normal centriolar homeostasis and preventing formation of ectopic microtubular organizing centers. The sequence is that of Neuralized-like protein 4 (NEURL4) from Homo sapiens (Human).